The chain runs to 570 residues: Phosphoribosylaminoimidazole carboxylase (570 aa).

One can recognise an ATP-grasp domain in the interval 110–297; the sequence is KQHLVKNRIP…QFEAHLRAIL (188 aa). Residue 137 to 192 coordinates ATP; sequence GSSLGYPFVLKSRTLAYDGRGNFVVKSEEDIEKGLEFLANRPLYAEKWASFKKELS.

The protein in the C-terminal section; belongs to the AIR carboxylase family. Class I subfamily.

It catalyses the reaction 5-amino-1-(5-phospho-D-ribosyl)imidazole-4-carboxylate + H(+) = 5-amino-1-(5-phospho-beta-D-ribosyl)imidazole + CO2. The protein operates within purine metabolism; IMP biosynthesis via de novo pathway; 5-amino-1-(5-phospho-D-ribosyl)imidazole-4-carboxylate from 5-amino-1-(5-phospho-D-ribosyl)imidazole (carboxylase route): step 1/1. This is Phosphoribosylaminoimidazole carboxylase (ADE2) from Candida glabrata (strain ATCC 2001 / BCRC 20586 / JCM 3761 / NBRC 0622 / NRRL Y-65 / CBS 138) (Yeast).